A 565-amino-acid chain; its full sequence is Ubiquitin carboxyl-terminal hydrolase 21 (565 aa).

Residues 1 to 14 (MPQASEHRLGRTRE) are compositionally biased toward basic and acidic residues. The disordered stretch occupies residues 1 to 103 (MPQASEHRLG…PPPTVALPLP (103 aa)). Residues 48-57 (MLRPLPPRPG) show a composition bias toward pro residues. The segment covering 58–70 (LPDERLKKLELGR) has biased composition (basic and acidic residues). Positions 134 to 152 (ELGAALSRLALRPEPPTLR) match the Nuclear export signal motif. Residues 212-558 (VGLRNLGNTC…EGYVLFYQLM (347 aa)) enclose the USP domain. Residue Cys-221 is the Nucleophile of the active site. 4 residues coordinate Zn(2+): Cys-384, Cys-387, Cys-437, and Cys-440. His-518 (proton acceptor) is an active-site residue.

It belongs to the peptidase C19 family. USP21 subfamily. As to quaternary structure, interacts with BEND3. In terms of tissue distribution, highly expressed in heart, pancreas and skeletal muscle. Also expressed in brain, placenta, liver and kidney, and at very low level in lung.

It is found in the cytoplasm. Its subcellular location is the nucleus. It catalyses the reaction Thiol-dependent hydrolysis of ester, thioester, amide, peptide and isopeptide bonds formed by the C-terminal Gly of ubiquitin (a 76-residue protein attached to proteins as an intracellular targeting signal).. In terms of biological role, deubiquitinates histone H2A, a specific tag for epigenetic transcriptional repression, thereby acting as a coactivator. Deubiquitination of histone H2A releaves the repression of di- and trimethylation of histone H3 at 'Lys-4', resulting in regulation of transcriptional initiation. Regulates gene expression via histone H2A deubiquitination. Deubiquitinates BAZ2A/TIP5 leading to its stabilization. Also capable of removing NEDD8 from NEDD8 conjugates but has no effect on Sentrin-1 conjugates. Also acts as a negative regulator of the ribosome quality control (RQC) by mediating deubiquitination of 40S ribosomal proteins RPS10/eS10 and RPS20/uS10, thereby antagonizing ZNF598-mediated 40S ubiquitination. In Homo sapiens (Human), this protein is Ubiquitin carboxyl-terminal hydrolase 21.